Consider the following 496-residue polypeptide: Palmitoleoyl-protein carboxylesterase NOTUM (496 aa).

The N-terminal stretch at Met1–Gly19 is a signal peptide. The tract at residues Glu21–Gly46 is disordered. Ser81 bears the Phosphoserine; by FAM20C mark. A glycan (N-linked (GlcNAc...) asparagine) is linked at Asn96. Active-site charge relay system residues include Ser232, Asp340, and His389.

Belongs to the pectinacetylesterase family. Notum subfamily. Rarely expressed in adult normal tissues.

It localises to the secreted. The enzyme catalyses [Wnt protein]-O-(9Z)-hexadecenoyl-L-serine + H2O = [Wnt protein]-L-serine + (9Z)-hexadecenoate + H(+). Its function is as follows. Carboxylesterase that acts as a key negative regulator of the Wnt signaling pathway by specifically mediating depalmitoleoylation of WNT proteins. Serine palmitoleoylation of WNT proteins is required for efficient binding to frizzled receptors. The chain is Palmitoleoyl-protein carboxylesterase NOTUM from Homo sapiens (Human).